We begin with the raw amino-acid sequence, 872 residues long: Cellulose synthase catalytic subunit [UDP-forming] (872 aa).

The next 4 membrane-spanning stretches (helical) occupy residues 30-50 (SAFSATLGCFWMILAWIFIPL), 151-171 (ILGIIVTFSLILALICVTQPF), 173-193 (PLAQFIFLMLLWGVALIVRRM), and 230-250 (LVCGLILLFAETYAWIVLVLG). The interval 271–364 (LWPSVDIFVP…FVSIFDCDHV (94 aa)) is catalytic subdomain A. Asp-313 is a catalytic residue. Positions 360 and 362 each coordinate substrate. The interval 441 to 501 (KPLDEIGGIA…GQRIRWARGM (61 aa)) is catalytic subdomain B. Asp-457 is an active-site residue. 5 consecutive transmembrane segments (helical) span residues 525–545 (VNAMFHFLSGIPRLIFLTAPL), 547–567 (FLLLHAYIIYAPALMIALFVL), 592–612 (IYETVLAWYIAPPTLVALINP), 640–660 (IFLVLLNLVGVAVGIWRYFYG), and 668–688 (VVVSMVWVFYNLIVLGGAVAV). The region spanning 694 to 790 (QVRRSHRVEM…QHIDFVQCTF (97 aa)) is the PilZ domain. The helical transmembrane segment at 833-853 (SVKGIFRVLTSLVSWVVSFIP) threads the bilayer.

It belongs to the glycosyltransferase 2 family. The cofactor is Mg(2+).

The protein resides in the cell inner membrane. It catalyses the reaction [(1-&gt;4)-beta-D-glucosyl](n) + UDP-alpha-D-glucose = [(1-&gt;4)-beta-D-glucosyl](n+1) + UDP + H(+). It participates in glycan metabolism; bacterial cellulose biosynthesis. Its activity is regulated as follows. Activated by bis-(3'-5') cyclic diguanylic acid (c-di-GMP). In terms of biological role, catalytic subunit of cellulose synthase. It polymerizes uridine 5'-diphosphate glucose to cellulose, which is produced as an extracellular component for mechanical and chemical protection at the onset of the stationary phase, when the cells exhibit multicellular behavior (rdar morphotype). Coexpression of cellulose and thin aggregative fimbriae (curli fimbrae or fibers) leads to a hydrophobic network with tightly packed cells embedded in a highly inert matrix that confers cohesion, elasticity and tissue-like properties to colonies. The protein is Cellulose synthase catalytic subunit [UDP-forming] (bcsA) of Escherichia coli (strain K12).